Here is a 308-residue protein sequence, read N- to C-terminus: Elongation factor Ts (308 aa).

Residues 80–83 (TDFV) form an involved in Mg(2+) ion dislocation from EF-Tu region.

The protein belongs to the EF-Ts family.

The protein localises to the cytoplasm. Its function is as follows. Associates with the EF-Tu.GDP complex and induces the exchange of GDP to GTP. It remains bound to the aminoacyl-tRNA.EF-Tu.GTP complex up to the GTP hydrolysis stage on the ribosome. The chain is Elongation factor Ts from Rhodopseudomonas palustris (strain ATCC BAA-98 / CGA009).